The primary structure comprises 310 residues: 300 kDa antigen AG231 (310 aa).

The segment at 1–23 (VTGSCVVTGSCVVTDSCVVTGSC) is 4 X 6 AA tandem repeats of V-V-T-G-S-C. A 13 X 6 AA tandem repeats of V-V-[TI]-[QE]-E-[PH] region spans residues 29–106 (VTTQESVTTQ…TQEPVTVEEH (78 aa)). Low complexity predominate over residues 53–101 (VTIEEPVTTQEPVTIEEPVTTQEPVTTQEPVTTQEPVTTQEPVTTQEPV). A disordered region spans residues 53 to 310 (VTIEEPVTTQ…FGRGNKNDKK (258 aa)). Composition is skewed to basic and acidic residues over residues 103–114 (VEEHIDEKKGSE) and 147–160 (NKND…KKPS). Residues 107 to 152 (IDEKKGSEGDNISLSSLSEETEEKSHTKKKKSSWLKFGRGNKNDKK) form a 45 AA repeat 1 repeat. The span at 176–190 (TDSQISVNAQDSVTI) shows a compositional bias: polar residues. The tract at residues 188-265 (VTIQEPTATQ…TQEPSTTQEH (78 aa)) is 13 X 6 AA approximate tandem repeats. A compositionally biased stretch (low complexity) spans 191–235 (QEPTATQEPPTTQELTATQEPTTTQETVTEQEPTTTQETVTAQEP). Residues 236–263 (ITTQEPVTAQEPVTTQELIATQEPSTTQ) are compositionally biased toward polar residues. Positions 264–273 (EHADEKKASE) are enriched in basic and acidic residues. One copy of the 45 AA repeat 2 repeat lies at 266-310 (ADEKKASEGDNISLSRLSEETEEKSHTKKKSSWLKFGRGNKNDKK).

In Plasmodium falciparum (isolate FC27 / Papua New Guinea), this protein is 300 kDa antigen AG231 (FIRA).